We begin with the raw amino-acid sequence, 411 residues long: MTNKTWGGRFKKSLDSGVNQFNASLSFDHVLFDQDINGSQVHVKQLAKQKILTEAECQGIYSALEEIRTEIKQGQYSFNERDEEDIHMFIEQLLIQKIGDLGKKLHTGRSRNDQVALDLRLYTRDKGCLINELLTRLIVCLDDLTSKHQQDLMPGYTHLQQAQPVALGAYFNAYQCMFSRDKSRLEDWFKRMNYSPLGAGALAGSTLPLDREWVAESLGFAGIIPNTLDAVSDRDFVIELCSVAAMIMMHLSRLCEDLILWSTQEFNFVTLDDAFATGSSLMPNKKNPDVPELIRGKSGRVYGHLMAILTVMKGLPLAYNKDMQEDKEGLFDTINTIIVCLQMITPFLQSLTFNTPLMRTKAQSGYLDATAILESLVMKGMPFRDAHHQVGAWIAEAIEKQCSLNELLKGG.

Belongs to the lyase 1 family. Argininosuccinate lyase subfamily.

It is found in the cytoplasm. The catalysed reaction is 2-(N(omega)-L-arginino)succinate = fumarate + L-arginine. Its pathway is amino-acid biosynthesis; L-arginine biosynthesis; L-arginine from L-ornithine and carbamoyl phosphate: step 3/3. This chain is Argininosuccinate lyase, found in Legionella pneumophila (strain Lens).